Here is a 576-residue protein sequence, read N- to C-terminus: Lysine--tRNA ligase (576 aa).

The Mg(2+) site is built by Glu-412 and Glu-419.

Belongs to the class-II aminoacyl-tRNA synthetase family. Homodimer. The cofactor is Mg(2+).

Its subcellular location is the cytoplasm. It catalyses the reaction tRNA(Lys) + L-lysine + ATP = L-lysyl-tRNA(Lys) + AMP + diphosphate. This Parabacteroides distasonis (strain ATCC 8503 / DSM 20701 / CIP 104284 / JCM 5825 / NCTC 11152) protein is Lysine--tRNA ligase.